The primary structure comprises 450 residues: Regulator of sigma-E protease RseP (450 aa).

The helical transmembrane segment at 1–21 threads the bilayer; that stretch reads MLSFLWDLASFIVALGVLITV. Histidine 22 provides a ligand contact to Zn(2+). Residues 22-103 lie on the Periplasmic side of the membrane; sequence HEFGHFWVAR…VGQRAAIIAA (82 aa). Glutamate 23 is a catalytic residue. Histidine 26 is a Zn(2+) binding site. Residues 104 to 124 form a helical membrane-spanning segment; it reads GPVANFIFAIFAYWLVFIIGV. Residues 125–375 are Cytoplasmic-facing; that stretch reads PGVRPVVGEI…KGAGMTAELG (251 aa). PDZ domains follow at residues 127-220 and 222-309; these read VRPV…PRGP and IEPV…PKVI. The helical transmembrane segment at 376–396 threads the bilayer; that stretch reads VVYYLPFLALISVNLGIINLF. Residues 397 to 429 lie on the Periplasmic side of the membrane; the sequence is PLPVLDGGHLLFLAIEKIKGGPVSERVQDFCYR. A helical membrane pass occupies residues 430 to 450; sequence IGSILLVLLMGLALFNDFSRL.

It belongs to the peptidase M50B family. In terms of assembly, interacts with RseA; the third transmembrane domain can be cross-linked to the transmembrane domain of RseA. Requires Zn(2+) as cofactor.

It is found in the cell inner membrane. Its activity is regulated as follows. Inhibited by Zn(2+) chelator 1,10-phenanthroline. In terms of biological role, a site-2 regulated intramembrane protease (S2P) that cleaves the peptide bond between 'Ala-108' and 'Cys-109' in the transmembrane region of RseA. Part of a regulated intramembrane proteolysis (RIP) cascade. Acts on DegS-cleaved RseA to release the cytoplasmic domain of RseA, residue 'Val-148' of RseA may be required for this. This provides the cell with sigma-E (RpoE) activity through the proteolysis of RseA. Can also cleave sequences in transmembrane regions of other proteins (such as LacY) as well as liberated signal peptides of beta-lactamase, OmpF, LivK, SecM, PhoA, LivJ, OmpC, Lpp and TorA, probably within the membrane. Cleaves FecR within its transmembrane region to release an N-terminal cytoplasmic fragment which binds to sigma factor FecI, allowing it to activate transcription of the fecABCDE operon which mediates ferric citrate transport. This chain is Regulator of sigma-E protease RseP (rseP), found in Escherichia coli (strain K12).